Consider the following 428-residue polypeptide: Pregnancy-specific beta-1-glycoprotein 3 (428 aa).

An N-terminal signal peptide occupies residues 1–34 (MGPLSAPPCTQRITWKGLLLTALLLNFWNLPTTA). The Ig-like V-type domain occupies 35–144 (QVTIEAEPTK…TGHFTFTLYL (110 aa)). N-linked (GlcNAc...) asparagine glycosylation is found at asparagine 104 and asparagine 111. Residues 127–129 (RGD) carry the Cell attachment site motif. Ig-like C2-type domains lie at 147–234 (PKPS…VTLN), 240–327 (PKPY…VTLN), and 335–410 (PRIY…KSMT). Cystine bridges form between cysteine 169–cysteine 217, cysteine 262–cysteine 310, and cysteine 354–cysteine 394. N-linked (GlcNAc...) asparagine glycosylation is found at asparagine 268 and asparagine 303.

It belongs to the immunoglobulin superfamily. CEA family.

It is found in the secreted. This Homo sapiens (Human) protein is Pregnancy-specific beta-1-glycoprotein 3 (PSG3).